Consider the following 325-residue polypeptide: Tetraacyldisaccharide 4'-kinase (325 aa).

58–65 (TVGGSGKT) serves as a coordination point for ATP.

This sequence belongs to the LpxK family.

The catalysed reaction is a lipid A disaccharide + ATP = a lipid IVA + ADP + H(+). It functions in the pathway glycolipid biosynthesis; lipid IV(A) biosynthesis; lipid IV(A) from (3R)-3-hydroxytetradecanoyl-[acyl-carrier-protein] and UDP-N-acetyl-alpha-D-glucosamine: step 6/6. In terms of biological role, transfers the gamma-phosphate of ATP to the 4'-position of a tetraacyldisaccharide 1-phosphate intermediate (termed DS-1-P) to form tetraacyldisaccharide 1,4'-bis-phosphate (lipid IVA). In Coxiella burnetii (strain CbuG_Q212) (Coxiella burnetii (strain Q212)), this protein is Tetraacyldisaccharide 4'-kinase.